The following is a 469-amino-acid chain: Adenosylhomocysteinase (469 aa).

Substrate-binding residues include Thr-63, Asp-139, and Glu-164. Residue 165 to 167 (TTT) participates in NAD(+) binding. Substrate-binding residues include Lys-194 and Asp-198. NAD(+) contacts are provided by residues Asn-199, 228 to 233 (GYGDVG), Glu-251, Asn-300, 321 to 323 (IGH), and Asn-375.

Belongs to the adenosylhomocysteinase family. It depends on NAD(+) as a cofactor.

It localises to the cytoplasm. It carries out the reaction S-adenosyl-L-homocysteine + H2O = L-homocysteine + adenosine. The protein operates within amino-acid biosynthesis; L-homocysteine biosynthesis; L-homocysteine from S-adenosyl-L-homocysteine: step 1/1. Its function is as follows. May play a key role in the regulation of the intracellular concentration of adenosylhomocysteine. This Pseudomonas aeruginosa (strain UCBPP-PA14) protein is Adenosylhomocysteinase.